Reading from the N-terminus, the 359-residue chain is Nicotinate-nucleotide--dimethylbenzimidazole phosphoribosyltransferase (359 aa).

Glu-318 (proton acceptor) is an active-site residue.

This sequence belongs to the CobT family. Homodimer.

The catalysed reaction is 5,6-dimethylbenzimidazole + nicotinate beta-D-ribonucleotide = alpha-ribazole 5'-phosphate + nicotinate + H(+). Its pathway is nucleoside biosynthesis; alpha-ribazole biosynthesis; alpha-ribazole from 5,6-dimethylbenzimidazole: step 1/2. Functionally, catalyzes the synthesis of alpha-ribazole-5'-phosphate from nicotinate mononucleotide (NAMN) and 5,6-dimethylbenzimidazole (DMB). The protein is Nicotinate-nucleotide--dimethylbenzimidazole phosphoribosyltransferase of Escherichia coli O157:H7.